The chain runs to 720 residues: DNA gyrase subunit B (720 aa).

A compositionally biased stretch (low complexity) spans 1–26; sequence MVDAMPENPAEEPTAASAAPNPEAVP. The disordered stretch occupies residues 1–42; that stretch reads MVDAMPENPAEEPTAASAAPNPEAVPDAVGQPEAPVKDRKVP. One can recognise a Toprim domain in the interval 498 to 612; sequence CEVYIVEGDS…AGHVFLAQPP (115 aa). Mg(2+) is bound by residues glutamate 504, aspartate 577, and aspartate 579.

Belongs to the type II topoisomerase GyrB family. As to quaternary structure, heterotetramer, composed of two GyrA and two GyrB chains. In the heterotetramer, GyrA contains the active site tyrosine that forms a transient covalent intermediate with the DNA, while GyrB binds cofactors and catalyzes ATP hydrolysis. Mg(2+) serves as cofactor. The cofactor is Mn(2+). It depends on Ca(2+) as a cofactor.

The protein localises to the cytoplasm. It carries out the reaction ATP-dependent breakage, passage and rejoining of double-stranded DNA.. Its activity is regulated as follows. Supercoiling activity inhibited by novobiocin and coumermycin, DNA wrapping around gyrase is not inhibited. A type II topoisomerase that negatively supercoils DNA in an ATP-dependent manner. About 140 bp of DNA wraps around gyrase in the presence or absence of ATP, when ATP is added negative supercoils are made. Functionally, a type II topoisomerase that negatively supercoils closed circular double-stranded (ds) DNA in an ATP-dependent manner to modulate DNA topology and maintain chromosomes in an underwound state. Negative supercoiling favors strand separation, and DNA replication, transcription, recombination and repair, all of which involve strand separation. Also able to catalyze the interconversion of other topological isomers of dsDNA rings, including catenanes and knotted rings. Type II topoisomerases break and join 2 DNA strands simultaneously in an ATP-dependent manner. This Micrococcus luteus (strain ATCC 4698 / DSM 20030 / JCM 1464 / CCM 169 / CCUG 5858 / IAM 1056 / NBRC 3333 / NCIMB 9278 / NCTC 2665 / VKM Ac-2230) (Micrococcus lysodeikticus) protein is DNA gyrase subunit B.